Reading from the N-terminus, the 808-residue chain is Sucrose synthase isoform 1 (808 aa).

The GT-B glycosyltransferase stretch occupies residues methionine 277 to threonine 754.

This sequence belongs to the glycosyltransferase 1 family. Plant sucrose synthase subfamily. In terms of assembly, homotetramer. Expressed in stems, in roots at different developmental stages, and in flower buds, flowers and maturing seeds, with the highest levels in strong utilization sinks for sucrose such as growing stems and tap root tips.

It catalyses the reaction an NDP-alpha-D-glucose + D-fructose = a ribonucleoside 5'-diphosphate + sucrose + H(+). Its activity is regulated as follows. Fructose acts as a non-competitive inhibitor with an inhibition constant of 17.2 mM. In contrast, glucose inhibits uncompetitively with an inhibition constant of 4.3 mM. Its function is as follows. Sucrose-cleaving enzyme that provides UDP-glucose and fructose for various metabolic pathways. The protein is Sucrose synthase isoform 1 of Daucus carota (Wild carrot).